A 391-amino-acid polypeptide reads, in one-letter code: MATFAELVLSTSRCTCPCRSFTRKPLIRPPLSGLRLPGDTKPLFRSGLGRISVSRRFLTAVARAESDQLGDDDHSKGIDRIHNLQNVEDKQKKASQLKKRVIFGIGIGLPVGCVVLAGGWVFTVALASSVFIGSREYFELVRSRGIAKGMTPPPRYVSRVCSVICALMPILTLYFGNIDILVTSAAFVVAIALLVQRGSPRFAQLSSTMFGLFYCGYLPSFWVKLRCGLAAPALNTGIGRTWPILLGGQAHWTVGLVATLISFSGVIATDTFAFLGGKTFGRTPLTSISPKKTWEGTIVGLVGCIAITILLSKYLSWPQSLFSSVAFGFLNFFGSVFGDLTESMIKRDAGVKDSGSLIPGHGGILDRVDSYIFTGALAYSFIKTSLKLYGV.

The N-terminal 61 residues, 1-61 (MATFAELVLS…SVSRRFLTAV (61 aa)), are a transit peptide targeting the chloroplast. Transmembrane regions (helical) follow at residues 102–122 (IFGI…GWVF), 175–195 (FGNI…ALLV), 202–222 (FAQL…PSFW), 254–274 (VGLV…TFAF), 298–318 (IVGL…LSWP), and 321–341 (LFSS…GDLT).

This sequence belongs to the CDS family. Requires Mg(2+) as cofactor.

Its subcellular location is the plastid. It localises to the chloroplast membrane. The enzyme catalyses a 1,2-diacyl-sn-glycero-3-phosphate + CTP + H(+) = a CDP-1,2-diacyl-sn-glycerol + diphosphate. It functions in the pathway phospholipid metabolism; CDP-diacylglycerol biosynthesis; CDP-diacylglycerol from sn-glycerol 3-phosphate: step 3/3. Its activity is regulated as follows. Highest activities is obtained at about 30 mM CTP and 2 mM phosphatidic acid (PA). In terms of biological role, may be involved in the synthesis of minor phospholipids and in modulation of IP3-mediated signal transduction. Promotes the biosynthesis of plastidial phosphatidylglycerol (PG) which is required for structure and function of thylakoid membranes and, hence, for photoautotrophic growth. The polypeptide is Phosphatidate cytidylyltransferase 4, chloroplastic (Arabidopsis thaliana (Mouse-ear cress)).